Consider the following 264-residue polypeptide: tRNA pseudouridine synthase A (264 aa).

The active-site Nucleophile is Asp51. Tyr109 serves as a coordination point for substrate.

Belongs to the tRNA pseudouridine synthase TruA family. Homodimer.

It carries out the reaction uridine(38/39/40) in tRNA = pseudouridine(38/39/40) in tRNA. Formation of pseudouridine at positions 38, 39 and 40 in the anticodon stem and loop of transfer RNAs. The sequence is that of tRNA pseudouridine synthase A from Staphylococcus aureus (strain MRSA252).